Reading from the N-terminus, the 327-residue chain is GPI-linked NAD(P)(+)--arginine ADP-ribosyltransferase 1 (327 aa).

The signal sequence occupies residues Met1–Ala22. Intrachain disulfides connect Cys53–Cys277 and Cys174–Cys224. N-linked (GlcNAc...) asparagine glycosylation occurs at Asn65. The 201-residue stretch at Gln73 to Ser273 folds into the TR mART core domain. NAD(+)-binding residues include Tyr121 and Arg179. Active-site residues include Arg179 and Ser202. Ser233 contacts NAD(+). The active site involves Glu240. The N-linked (GlcNAc...) asparagine glycan is linked to Asn253. Ser295 is lipidated: GPI-anchor amidated serine. The propeptide at Ala296 to Leu327 is removed in mature form.

This sequence belongs to the Arg-specific ADP-ribosyltransferase family.

Its subcellular location is the sarcoplasmic reticulum membrane. It catalyses the reaction L-arginyl-[protein] + NAD(+) = N(omega)-(ADP-D-ribosyl)-L-arginyl-[protein] + nicotinamide + H(+). Functionally, has ADP-ribosyltransferase activity toward GLP1R. The polypeptide is GPI-linked NAD(P)(+)--arginine ADP-ribosyltransferase 1 (ART1) (Homo sapiens (Human)).